The chain runs to 179 residues: MSHLTVYRDDDPDDIVLRTDDAAVIADALRGIGARFERWDSPVVPPLDATPDAVLNTYRPYLDELMGETGAGSADVVRINAATPNLTALRDKFLSEHTHSEDEVRFFVHGSGNFVLHVDGRVYDVCCTAGDLISVPRGTPHWFDAGLSPDVVALRVFTDTTGWIADYTGDDIARRFPVS.

Fe(2+) is bound by residues His97, His99, Glu103, and His141. Positions 97, 99, 103, and 141 each coordinate Ni(2+).

Belongs to the acireductone dioxygenase (ARD) family. As to quaternary structure, monomer. Requires Fe(2+) as cofactor. It depends on Ni(2+) as a cofactor.

The catalysed reaction is 1,2-dihydroxy-5-(methylsulfanyl)pent-1-en-3-one + O2 = 3-(methylsulfanyl)propanoate + CO + formate + 2 H(+). The enzyme catalyses 1,2-dihydroxy-5-(methylsulfanyl)pent-1-en-3-one + O2 = 4-methylsulfanyl-2-oxobutanoate + formate + 2 H(+). It participates in amino-acid biosynthesis; L-methionine biosynthesis via salvage pathway; L-methionine from S-methyl-5-thio-alpha-D-ribose 1-phosphate: step 5/6. In terms of biological role, catalyzes 2 different reactions between oxygen and the acireductone 1,2-dihydroxy-3-keto-5-methylthiopentene (DHK-MTPene) depending upon the metal bound in the active site. Fe-containing acireductone dioxygenase (Fe-ARD) produces formate and 2-keto-4-methylthiobutyrate (KMTB), the alpha-ketoacid precursor of methionine in the methionine recycle pathway. Ni-containing acireductone dioxygenase (Ni-ARD) produces methylthiopropionate, carbon monoxide and formate, and does not lie on the methionine recycle pathway. This Gluconacetobacter diazotrophicus (strain ATCC 49037 / DSM 5601 / CCUG 37298 / CIP 103539 / LMG 7603 / PAl5) protein is Acireductone dioxygenase.